The chain runs to 95 residues: Aspartyl/glutamyl-tRNA(Asn/Gln) amidotransferase subunit C (95 aa).

This sequence belongs to the GatC family. In terms of assembly, heterotrimer of A, B and C subunits.

The enzyme catalyses L-glutamyl-tRNA(Gln) + L-glutamine + ATP + H2O = L-glutaminyl-tRNA(Gln) + L-glutamate + ADP + phosphate + H(+). The catalysed reaction is L-aspartyl-tRNA(Asn) + L-glutamine + ATP + H2O = L-asparaginyl-tRNA(Asn) + L-glutamate + ADP + phosphate + 2 H(+). Allows the formation of correctly charged Asn-tRNA(Asn) or Gln-tRNA(Gln) through the transamidation of misacylated Asp-tRNA(Asn) or Glu-tRNA(Gln) in organisms which lack either or both of asparaginyl-tRNA or glutaminyl-tRNA synthetases. The reaction takes place in the presence of glutamine and ATP through an activated phospho-Asp-tRNA(Asn) or phospho-Glu-tRNA(Gln). This Cereibacter sphaeroides (strain ATCC 17025 / ATH 2.4.3) (Rhodobacter sphaeroides) protein is Aspartyl/glutamyl-tRNA(Asn/Gln) amidotransferase subunit C.